Reading from the N-terminus, the 160-residue chain is uncharacterized protein (160 aa).

A helical transmembrane segment spans residues 137–157; sequence YNILFVVVILLLLFVAWRCYV.

The protein resides in the host membrane. Its subcellular location is the virion. This is an uncharacterized protein from Acanthamoeba polyphaga mimivirus (APMV).